Here is a 38-residue protein sequence, read N- to C-terminus: Large ribosomal subunit protein bL36 (38 aa).

It belongs to the bacterial ribosomal protein bL36 family.

The sequence is that of Large ribosomal subunit protein bL36 from Fervidobacterium nodosum (strain ATCC 35602 / DSM 5306 / Rt17-B1).